The following is a 426-amino-acid chain: Glutamate-1-semialdehyde 2,1-aminomutase (426 aa).

Lysine 265 bears the N6-(pyridoxal phosphate)lysine mark.

This sequence belongs to the class-III pyridoxal-phosphate-dependent aminotransferase family. HemL subfamily. As to quaternary structure, homodimer. The cofactor is pyridoxal 5'-phosphate.

The protein resides in the cytoplasm. It carries out the reaction (S)-4-amino-5-oxopentanoate = 5-aminolevulinate. The protein operates within porphyrin-containing compound metabolism; protoporphyrin-IX biosynthesis; 5-aminolevulinate from L-glutamyl-tRNA(Glu): step 2/2. The chain is Glutamate-1-semialdehyde 2,1-aminomutase from Akkermansia muciniphila (strain ATCC BAA-835 / DSM 22959 / JCM 33894 / BCRC 81048 / CCUG 64013 / CIP 107961 / Muc).